Here is a 425-residue protein sequence, read N- to C-terminus: Lipoyl synthase, mitochondrial (425 aa).

Residues 1-33 constitute a mitochondrion transit peptide; it reads MAASSTRLRCLYASSSTWKTSPSQSLISLSRRY. Residues 17 to 55 are disordered; the sequence is TWKTSPSQSLISLSRRYATTSSAPPTPSDESSSTLPKRR. The span at 33–51 shows a compositional bias: polar residues; the sequence is YATTSSAPPTPSDESSSTL. Residues Cys142, Cys147, Cys153, Cys173, Cys177, Cys180, and Ser388 each contribute to the [4Fe-4S] cluster site. The Radical SAM core domain maps to 156–377; it reads GSDKSAATAT…RQRALEMGFL (222 aa).

Belongs to the radical SAM superfamily. Lipoyl synthase family. It depends on [4Fe-4S] cluster as a cofactor.

The protein resides in the mitochondrion. The enzyme catalyses [[Fe-S] cluster scaffold protein carrying a second [4Fe-4S](2+) cluster] + N(6)-octanoyl-L-lysyl-[protein] + 2 oxidized [2Fe-2S]-[ferredoxin] + 2 S-adenosyl-L-methionine + 4 H(+) = [[Fe-S] cluster scaffold protein] + N(6)-[(R)-dihydrolipoyl]-L-lysyl-[protein] + 4 Fe(3+) + 2 hydrogen sulfide + 2 5'-deoxyadenosine + 2 L-methionine + 2 reduced [2Fe-2S]-[ferredoxin]. The protein operates within protein modification; protein lipoylation via endogenous pathway; protein N(6)-(lipoyl)lysine from octanoyl-[acyl-carrier-protein]: step 2/2. Functionally, catalyzes the radical-mediated insertion of two sulfur atoms into the C-6 and C-8 positions of the octanoyl moiety bound to the lipoyl domains of lipoate-dependent enzymes, thereby converting the octanoylated domains into lipoylated derivatives. The sequence is that of Lipoyl synthase, mitochondrial from Talaromyces marneffei (strain ATCC 18224 / CBS 334.59 / QM 7333) (Penicillium marneffei).